A 273-amino-acid polypeptide reads, in one-letter code: MHEAQIRVAIAGAGGRMGRQLIQAAMAMEGVQLGAALEREGSSLLGSDAGELAGAGKSGVIVQSSLEAVKDDFDVFIDFTRPEGTLTHLAFCRQHGKGMVIGTTGFDDAGKQAIREASQEIAIVFAANFSVGVNVMLKLLEKAAKVMGDYSDIEIIEAHHRHKVDAPSGTALAMGEAIAGALDKNLKDCAVYSREGYTGERVAGTIGFATVRAGDIVGEHTAMFADIGERVEITHKASSRMTFANGALRSALWLKTKKNGLFDMRDVLGLDVL.

NAD(+) is bound by residues 12-17 and Glu-38; that span reads GAGGRM. Arg-39 lines the NADP(+) pocket. Residues 102–104 and 126–129 each bind NAD(+); these read GTT and AANF. Residue His-159 is the Proton donor/acceptor of the active site. (S)-2,3,4,5-tetrahydrodipicolinate is bound at residue His-160. Lys-163 (proton donor) is an active-site residue. 169–170 serves as a coordination point for (S)-2,3,4,5-tetrahydrodipicolinate; it reads GT.

Belongs to the DapB family. Homotetramer.

The protein resides in the cytoplasm. The catalysed reaction is (S)-2,3,4,5-tetrahydrodipicolinate + NAD(+) + H2O = (2S,4S)-4-hydroxy-2,3,4,5-tetrahydrodipicolinate + NADH + H(+). The enzyme catalyses (S)-2,3,4,5-tetrahydrodipicolinate + NADP(+) + H2O = (2S,4S)-4-hydroxy-2,3,4,5-tetrahydrodipicolinate + NADPH + H(+). Its pathway is amino-acid biosynthesis; L-lysine biosynthesis via DAP pathway; (S)-tetrahydrodipicolinate from L-aspartate: step 4/4. Catalyzes the conversion of 4-hydroxy-tetrahydrodipicolinate (HTPA) to tetrahydrodipicolinate. This is 4-hydroxy-tetrahydrodipicolinate reductase from Salmonella typhimurium (strain LT2 / SGSC1412 / ATCC 700720).